A 376-amino-acid chain; its full sequence is Polygalacturonase (376 aa).

An N-terminal signal peptide occupies residues 1-20 (MASSLKLGLIALLGATAVNA). C39 and C57 are disulfide-bonded. The stretch at 170 to 208 (AKELTLSGITVDTADGDSNGGHNTDAFDVGSSNGVYITS) is one PbH1 1 repeat. The active-site Proton donor is the D215. A disulfide bridge links C217 with C233. PbH1 repeat units follow at residues 223–243 (GTNV…SIGS), 252–273 (VDGV…RIKT), 281–303 (VQGV…VIEQ), and 315–360 (TSGV…SITG). H237 is an active-site residue. 2 disulfide bridges follow: C343–C348 and C367–C376.

Belongs to the glycosyl hydrolase 28 family.

The protein resides in the secreted. It catalyses the reaction (1,4-alpha-D-galacturonosyl)n+m + H2O = (1,4-alpha-D-galacturonosyl)n + (1,4-alpha-D-galacturonosyl)m.. This is Polygalacturonase (PGG1) from Penicillium griseoroseum.